Consider the following 197-residue polypeptide: Phosphoheptose isomerase (197 aa).

Positions 34–196 constitute an SIS domain; it reads MVQCLLGGNK…DRTLFPQDEQ (163 aa). 49–51 lines the substrate pocket; it reads NGG. His58 and Glu62 together coordinate Zn(2+). Residues Glu62, 91–92, 117–119, Ser122, and Gln172 each bind substrate; these read ND and STS. Residues Gln172 and His180 each coordinate Zn(2+).

It belongs to the SIS family. GmhA subfamily. In terms of assembly, homotetramer. It depends on Zn(2+) as a cofactor.

The protein localises to the cytoplasm. It catalyses the reaction 2 D-sedoheptulose 7-phosphate = D-glycero-alpha-D-manno-heptose 7-phosphate + D-glycero-beta-D-manno-heptose 7-phosphate. It functions in the pathway carbohydrate biosynthesis; D-glycero-D-manno-heptose 7-phosphate biosynthesis; D-glycero-alpha-D-manno-heptose 7-phosphate and D-glycero-beta-D-manno-heptose 7-phosphate from sedoheptulose 7-phosphate: step 1/1. Catalyzes the isomerization of sedoheptulose 7-phosphate in D-glycero-D-manno-heptose 7-phosphate. This is Phosphoheptose isomerase from Shewanella oneidensis (strain ATCC 700550 / JCM 31522 / CIP 106686 / LMG 19005 / NCIMB 14063 / MR-1).